The chain runs to 210 residues: Thymidylate kinase (210 aa).

Position 10–17 (Gly-10–Ser-17) interacts with ATP.

This sequence belongs to the thymidylate kinase family.

It catalyses the reaction dTMP + ATP = dTDP + ADP. Phosphorylation of dTMP to form dTDP in both de novo and salvage pathways of dTTP synthesis. The chain is Thymidylate kinase from Hamiltonella defensa subsp. Acyrthosiphon pisum (strain 5AT).